Here is a 182-residue protein sequence, read N- to C-terminus: Glycoprotein Q2 (182 aa).

Residues Met-1–Ala-20 form the signal peptide. N-linked (GlcNAc...) asparagine; by host glycans are attached at residues Asn-74 and Asn-110.

Interacts with isoform gQ2. The heterodimer gQ1-gQ2 associates with the glycoprotein complex gH-gL to form a tetrameric complex. The gH/gL/gQ1/gQ2 complex binds to host TNFRSF4. Post-translationally, glycosylated by host.

The protein localises to the virion membrane. It is found in the host endoplasmic reticulum-Golgi intermediate compartment. Functionally, plays a role in virus entry by participating in host receptor binding at the cell surface. This is Glycoprotein Q2 from Human herpesvirus 6B (strain Z29) (HHV-6 variant B).